We begin with the raw amino-acid sequence, 227 residues long: Peptidyl-tRNA hydrolase (227 aa).

Y14 is a tRNA binding site. H19 functions as the Proton acceptor in the catalytic mechanism. Residues F64, N66, and N112 each coordinate tRNA. A disordered region spans residues 182 to 227 (RIALLTQPPKPPKPPKPPKDGAKETAGKGTEAETAKPPGPAAGRTG). The span at 198–215 (PPKDGAKETAGKGTEAET) shows a compositional bias: basic and acidic residues.

It belongs to the PTH family. Monomer.

It localises to the cytoplasm. The enzyme catalyses an N-acyl-L-alpha-aminoacyl-tRNA + H2O = an N-acyl-L-amino acid + a tRNA + H(+). Functionally, hydrolyzes ribosome-free peptidyl-tRNAs (with 1 or more amino acids incorporated), which drop off the ribosome during protein synthesis, or as a result of ribosome stalling. Its function is as follows. Catalyzes the release of premature peptidyl moieties from peptidyl-tRNA molecules trapped in stalled 50S ribosomal subunits, and thus maintains levels of free tRNAs and 50S ribosomes. The protein is Peptidyl-tRNA hydrolase of Rhodospirillum centenum (strain ATCC 51521 / SW).